Consider the following 459-residue polypeptide: Phosphoglucosamine mutase (459 aa).

Residue S102 is the Phosphoserine intermediate of the active site. Residues S102, D243, D245, and D247 each contribute to the Mg(2+) site. S102 bears the Phosphoserine mark.

The protein belongs to the phosphohexose mutase family. Mg(2+) serves as cofactor. In terms of processing, activated by phosphorylation.

The catalysed reaction is alpha-D-glucosamine 1-phosphate = D-glucosamine 6-phosphate. Its function is as follows. Catalyzes the conversion of glucosamine-6-phosphate to glucosamine-1-phosphate. This chain is Phosphoglucosamine mutase, found in Bartonella quintana (strain Toulouse) (Rochalimaea quintana).